A 130-amino-acid polypeptide reads, in one-letter code: MSGGKGKVGSSEKASTSRSAKAGLTFPVGRIHRLLRKGNYAQRVGSGAPVYLTSVLEYLTAEILELAGNAARDNKKSRIIPRHLQLAIRNDEELNKLLGHVTIAQGGVLPNIHQSLLPSKKSIKGASQEL.

Residues 1-21 form a disordered region; the sequence is MSGGKGKVGSSEKASTSRSAK. An N-acetylserine modification is found at Ser2. N6-acetyllysine is present on residues Lys5 and Lys7. Residue Gln105 is modified to N5-methylglutamine. The residue at position 127 (Ser127) is a Phosphoserine. The short motif at 127–128 is the [ST]-Q motif element; it reads SQ.

This sequence belongs to the histone H2A family. As to quaternary structure, the nucleosome is a histone octamer containing two molecules each of H2A, H2B, H3 and H4 assembled in one H3-H4 heterotetramer and two H2A-H2B heterodimers. The octamer wraps approximately 147 bp of DNA. Phosphorylated to form H2AS128ph (gamma-H2A) in response to DNA double-strand breaks (DSBs) generated by exogenous genotoxic agents and by stalled replication forks. Phosphorylation is dependent on the DNA damage checkpoint kinases MEC1/ATR and TEL1/ATM, spreads on either side of a detected DSB site and may mark the surrounding chromatin for recruitment of proteins required for DNA damage signaling and repair. Gamma-H2A is removed from the DNA prior to the strand invasion-primer extension step of the repair process and subsequently dephosphorylated. Dephosphorylation is necessary for efficient recovery from the DNA damage checkpoint. Post-translationally, acetylated by ESA1 to form H2AK4ac and H2AK7ac.

The protein localises to the nucleus. Its subcellular location is the chromosome. Core component of nucleosome which plays a central role in DNA double strand break (DSB) repair. Nucleosomes wrap and compact DNA into chromatin, limiting DNA accessibility to the cellular machineries which require DNA as a template. Histones thereby play a central role in transcription regulation, DNA repair, DNA replication and chromosomal stability. DNA accessibility is regulated via a complex set of post-translational modifications of histones, also called histone code, and nucleosome remodeling. This is Histone H2A.1 (HTA1) from Meyerozyma guilliermondii (strain ATCC 6260 / CBS 566 / DSM 6381 / JCM 1539 / NBRC 10279 / NRRL Y-324) (Yeast).